The sequence spans 79 residues: Dolichyl-diphosphooligosaccharide--protein glycosyltransferase subunit TMEM258 (79 aa).

2 helical membrane-spanning segments follow: residues Pro19–Ile39 and Phe55–Val75.

The protein belongs to the OST5 family. As to quaternary structure, component of the oligosaccharyltransferase (OST) complex.

It localises to the membrane. The protein operates within protein modification; protein glycosylation. Subunit of the oligosaccharyl transferase (OST) complex that catalyzes the initial transfer of a defined glycan (Glc(3)Man(9)GlcNAc(2) in eukaryotes) from the lipid carrier dolichol-pyrophosphate to an asparagine residue within an Asn-X-Ser/Thr consensus motif in nascent polypeptide chains, the first step in protein N-glycosylation. N-glycosylation occurs cotranslationally and the complex associates with the Sec61 complex at the channel-forming translocon complex that mediates protein translocation across the endoplasmic reticulum (ER). All subunits are required for a maximal enzyme activity. This chain is Dolichyl-diphosphooligosaccharide--protein glycosyltransferase subunit TMEM258, found in Caenorhabditis elegans.